The sequence spans 114 residues: Large ribosomal subunit protein bL19 (114 aa).

The protein belongs to the bacterial ribosomal protein bL19 family.

This protein is located at the 30S-50S ribosomal subunit interface and may play a role in the structure and function of the aminoacyl-tRNA binding site. This is Large ribosomal subunit protein bL19 from Listeria welshimeri serovar 6b (strain ATCC 35897 / DSM 20650 / CCUG 15529 / CIP 8149 / NCTC 11857 / SLCC 5334 / V8).